An 848-amino-acid polypeptide reads, in one-letter code: DNA mismatch repair protein MutS (848 aa).

605-612 (GPNMAGKS) is a binding site for ATP.

This sequence belongs to the DNA mismatch repair MutS family.

This protein is involved in the repair of mismatches in DNA. It is possible that it carries out the mismatch recognition step. This protein has a weak ATPase activity. The chain is DNA mismatch repair protein MutS from Leptospira interrogans serogroup Icterohaemorrhagiae serovar copenhageni (strain Fiocruz L1-130).